The primary structure comprises 83 residues: Bublin coiled-coil protein (83 aa).

Residues 1-25 (MSGPNGDLGTPVEAGAEGEEDGFGE) form a disordered region. Residues 25 to 74 (EAEYAAINSMLDQINSCLDHLEEKNDHLHARLQELLESNRQTRLEFQQQL) are a coiled coil. S82 is subject to Phosphoserine.

This sequence belongs to the UPF0184 (EST00098) family.

The protein resides in the cell junction. Its subcellular location is the cytoplasm. The protein localises to the cytoskeleton. Essential for intermediate filament organization in intestinal cells, interacts with intermediate filament and regulates intestinal lumen morphology. This is Bublin coiled-coil protein (BBLN) from Bos taurus (Bovine).